The following is a 256-amino-acid chain: Glucanase inhibitor protein 2 (256 aa).

An N-terminal signal peptide occupies residues 1–15; that stretch reads MKLISTIAAATTAFG. In terms of domain architecture, Peptidase S1 spans 27-254; it reads IFGGGIIPSG…ATEWINSVTK (228 aa). Cysteines 54 and 70 form a disulfide. Residues Asn-87, Asn-102, Asn-107, and Asn-157 are each glycosylated (N-linked (GlcNAc...) asparagine). 2 disulfide bridges follow: Cys-177-Cys-189 and Cys-199-Cys-230.

It belongs to the peptidase S1 family. In terms of assembly, forms an apoplastic complex with host endoglucanases in tomato leaves during P.infestans infection.

Its subcellular location is the secreted. Functionally, secreted effector that suppresses host plant glucan elicitor-mediated defense responses. Targets host endoglucanases and inhibits the endoglucanase-mediated release of elicitor-active glucan oligosaccharides from P.infestans cell walls. The chain is Glucanase inhibitor protein 2 from Phytophthora infestans (Potato late blight agent).